Consider the following 375-residue polypeptide: Anhydro-N-acetylmuramic acid kinase (375 aa).

Residue 12-19 participates in ATP binding; that stretch reads GTSMDGVD.

This sequence belongs to the anhydro-N-acetylmuramic acid kinase family.

The enzyme catalyses 1,6-anhydro-N-acetyl-beta-muramate + ATP + H2O = N-acetyl-D-muramate 6-phosphate + ADP + H(+). The protein operates within amino-sugar metabolism; 1,6-anhydro-N-acetylmuramate degradation. Its pathway is cell wall biogenesis; peptidoglycan recycling. Catalyzes the specific phosphorylation of 1,6-anhydro-N-acetylmuramic acid (anhMurNAc) with the simultaneous cleavage of the 1,6-anhydro ring, generating MurNAc-6-P. Is required for the utilization of anhMurNAc either imported from the medium or derived from its own cell wall murein, and thus plays a role in cell wall recycling. The polypeptide is Anhydro-N-acetylmuramic acid kinase (Photobacterium profundum (strain SS9)).